The sequence spans 80 residues: Photosystem II extrinsic protein V (80 aa).

M47 provides a ligand contact to heme.

Belongs to the cytochrome c family. PsbV subfamily. PSII is composed of 1 copy each of membrane proteins PsbA, PsbB, PsbC, PsbD, PsbE, PsbF, PsbH, PsbI, PsbJ, PsbK, PsbL, PsbM, PsbT, PsbY, PsbZ, Psb30/Ycf12, at least 3 peripheral proteins of the oxygen-evolving complex and a large number of cofactors. It forms dimeric complexes. Heme serves as cofactor.

The protein localises to the plastid. Its subcellular location is the chloroplast thylakoid membrane. Its function is as follows. One of the extrinsic, lumenal subunits of photosystem II (PSII). PSII is a light-driven water plastoquinone oxidoreductase, using light energy to abstract electrons from H(2)O, generating a proton gradient subsequently used for ATP formation. The extrinsic proteins stabilize the structure of photosystem II oxygen-evolving complex (OEC), the ion environment of oxygen evolution and protect the OEC against heat-induced inactivation. The sequence is that of Photosystem II extrinsic protein V from Thalassiosira weissflogii (Marine diatom).